The chain runs to 143 residues: Large ribosomal subunit protein uL11 (143 aa).

This sequence belongs to the universal ribosomal protein uL11 family. In terms of assembly, part of the ribosomal stalk of the 50S ribosomal subunit. Interacts with L10 and the large rRNA to form the base of the stalk. L10 forms an elongated spine to which L12 dimers bind in a sequential fashion forming a multimeric L10(L12)X complex. In terms of processing, one or more lysine residues are methylated.

In terms of biological role, forms part of the ribosomal stalk which helps the ribosome interact with GTP-bound translation factors. In Psychrobacter sp. (strain PRwf-1), this protein is Large ribosomal subunit protein uL11.